Consider the following 324-residue polypeptide: Serpentine receptor class gamma-10 (324 aa).

Transmembrane regions (helical) follow at residues 39–59 (SSYLIVGAVLNVMIVYTVFHG), 69–89 (MLYCADAIVGIYINTAEVIFG), 91–111 (IFIYITPLCPIASPYFFTPSI), 128–146 (TFSQIFMSFNRMTCVIFLM), 155–175 (ILKPVLIITFILPLGVIWKIL), 206–226 (LFHFTLCFVLVIIFFVATILG), 246–266 (MIMAVQTVTFASIQIYFVFFA), and 279–299 (IVSFVFDSLYVFSPIALIVMS).

Belongs to the nematode receptor-like protein srg family.

It is found in the membrane. The chain is Serpentine receptor class gamma-10 (srg-10) from Caenorhabditis elegans.